Consider the following 477-residue polypeptide: Acetolactate synthase small subunit 2, chloroplastic (477 aa).

Residues 1–53 (MAATTTATSLFSSRLHFQNQNQGYGFPAKTPNSLQVNQIIDGRKMRNATVLSA) constitute a chloroplast transit peptide. ACT domains are found at residues 78 to 150 (TISV…DLSK) and 309 to 383 (TLSL…NITH). L-valine-binding residues include aspartate 85, isoleucine 89, isoleucine 90, asparagine 103, isoleucine 104, asparagine 316, valine 320, leucine 321, asparagine 334, and isoleucine 335.

Belongs to the acetolactate synthase small subunit family. As to quaternary structure, the acetolactate synthase complex contains 4 homodimers of the large catalytic subunits, and 1 homotetramer of the small regulatory subunits. In terms of tissue distribution, expressed in roots in the vascular tissuem in cells around the quiescent center, in floral organs at the tips of young siliques and in the joint region between the silique and the pedicel. Barely detectable in mature leaves or siliques.

It is found in the plastid. The protein localises to the chloroplast. It localises to the peroxisome. It participates in amino-acid biosynthesis; L-isoleucine biosynthesis; L-isoleucine from 2-oxobutanoate: step 1/4. It functions in the pathway amino-acid biosynthesis; L-valine biosynthesis; L-valine from pyruvate: step 1/4. In terms of biological role, regulatory subunit of acetohydroxy-acid synthase. Involved in the feed-back inhibition by branched-chain amino acids but not in herbicide tolerance. May play a role in valine and isoleucine-mediated feedback inhibition in roots. In vitro, inhibited by valine, but not leucine or isoleucine. Required for reproductive development and sodium homeostasis. This chain is Acetolactate synthase small subunit 2, chloroplastic, found in Arabidopsis thaliana (Mouse-ear cress).